The sequence spans 241 residues: 3-deoxy-manno-octulosonate cytidylyltransferase (241 aa).

Belongs to the KdsB family.

It is found in the cytoplasm. The catalysed reaction is 3-deoxy-alpha-D-manno-oct-2-ulosonate + CTP = CMP-3-deoxy-beta-D-manno-octulosonate + diphosphate. The protein operates within nucleotide-sugar biosynthesis; CMP-3-deoxy-D-manno-octulosonate biosynthesis; CMP-3-deoxy-D-manno-octulosonate from 3-deoxy-D-manno-octulosonate and CTP: step 1/1. It functions in the pathway bacterial outer membrane biogenesis; lipopolysaccharide biosynthesis. Its function is as follows. Activates KDO (a required 8-carbon sugar) for incorporation into bacterial lipopolysaccharide in Gram-negative bacteria. This chain is 3-deoxy-manno-octulosonate cytidylyltransferase, found in Rickettsia rickettsii (strain Sheila Smith).